We begin with the raw amino-acid sequence, 516 residues long: MTLDLDALDRALDALPNLFRGPGGVAGVVKDGQVVASRAWGYADLTRRRPMETGTRLPICSISKQFTCGALLDTLGDTAAYDARVAEFLPQFEGPLPTLRQLCDNQSGLRDYWALTVLQGAEAAQTFRREDALPLIARMKTGHFPPGTAYSYCNCNFRIVSEILESETGRALRDLYAERIFGPAGMRTAELTSDTRHPADEVVGYEGSDAVGFFPADNGIFWIGDAGISASLQDMLAYESWIDATRNDENSIYRRISVPPAYVCGTPASYGFGLSHETVAGVKVTGHGGALRGFRAQRFHAADERLSVVVIFNHEASAHAAASSLLAAALGHEAPKGARPEGWAGQWLDPESGLLLRVGEDAEGLTLRFATGPDRLTAGEDGVPRGAGVSLAREGAMLVMNRTSDNLTVRAEPLPVVAVADAGEIAGRYHARELEADLVIEARDGGAYAGFEGLLGAGPMERLHPVGPDVWIVTTRRSMDAPAPGDWTLQVRREGGAVTGLRLGCWLARRIDYARV.

Residue serine 61 is the Nucleophile of the active site. Residue lysine 64 is the Proton donor/acceptor of the active site. An important for specificity region spans residues 476–486; sequence RRSMDAPAPGD. Aspartate 480 is a binding site for substrate.

This sequence belongs to the peptidase S12 family. Homodimer.

It carries out the reaction Release of an N-terminal D-amino acid from a peptide, Xaa-|-Yaa-, in which Xaa is preferably D-Ala, D-Ser or D-Thr. D-amino acid amides and methyl esters also are hydrolyzed, as is glycine amide.. Its activity is regulated as follows. Inhibited by beta-lactam compounds such as 6-aminopenicillic acid, 7-aminocephalosporanic acid, benzylpenicillin and ampicillin. Inhibited by p-chloromercuribenzoate. In terms of biological role, hydrolyzes N-terminal residues in D-amino acid-containing peptides. This Cereibacter sphaeroides (strain ATCC 17023 / DSM 158 / JCM 6121 / CCUG 31486 / LMG 2827 / NBRC 12203 / NCIMB 8253 / ATH 2.4.1.) (Rhodobacter sphaeroides) protein is D-aminopeptidase.